We begin with the raw amino-acid sequence, 416 residues long: Heat shock protein DDB_G0280215 (416 aa).

A sHSP domain is found at 37–150; it reads SMDWGWKPRM…SQHISLFGRE (114 aa). A disordered region spans residues 216–235; it reads ETKERERRIRDTKGETEKKK.

This sequence belongs to the small heat shock protein (HSP20) family.

The sequence is that of Heat shock protein DDB_G0280215 from Dictyostelium discoideum (Social amoeba).